A 95-amino-acid chain; its full sequence is Mitochondrial import inner membrane translocase subunit Tim13 (95 aa).

M1 bears the N-acetylmethionine mark. At S7 the chain carries Phosphoserine. The short motif at C46–C69 is the Twin CX3C motif element. 2 disulfide bridges follow: C46–C69 and C50–C65. N6-succinyllysine is present on K53.

This sequence belongs to the small Tim family. In terms of assembly, heterohexamer; composed of 3 copies of TIMM8 (TIMM8A or TIMM8B) and 3 copies of TIMM13, named soluble 70 kDa complex. Associates with the TIM22 complex, whose core is composed of TIMM22. As to expression, present at high level in liver and brain, and at lower level in muscle and heart. In CNS sections, it is predominantly present in the soma and the dendritic portion of the Purkinje cells of the cerebellum, but not in the glial cells. Scattered expression also is also detected in the brain stem, olfactory bulb, substantia nigra, hippocampus and striatum (at protein level).

It is found in the mitochondrion inner membrane. Mitochondrial intermembrane chaperone that participates in the import and insertion of some multi-pass transmembrane proteins into the mitochondrial inner membrane. Also required for the transfer of beta-barrel precursors from the TOM complex to the sorting and assembly machinery (SAM complex) of the outer membrane. Acts as a chaperone-like protein that protects the hydrophobic precursors from aggregation and guide them through the mitochondrial intermembrane space. The TIMM8-TIMM13 complex mediates the import of proteins such as TIMM23, SLC25A12/ARALAR1 and SLC25A13/ARALAR2, while the predominant TIMM9-TIMM10 70 kDa complex mediates the import of much more proteins. The polypeptide is Mitochondrial import inner membrane translocase subunit Tim13 (Timm13) (Mus musculus (Mouse)).